Consider the following 671-residue polypeptide: Vinexin (671 aa).

Glutamine 2 is modified (N-acetylalanine). Position 6 is a phosphoserine (arginine 6). Disordered regions lie at residues 46 to 111, 166 to 215, 249 to 268, 295 to 324, and 337 to 383; these read LNFQ…TKDS, TFEE…RPGA, LETG…EKPS, TRLP…AWSS, and SLSP…KKRK. Polar residues predominate over residues 88-108; the sequence is PSASTKIPASQHTQNWSATWT. The SoHo domain occupies 115 to 187; it reads DKRWVKYEGI…GAQQRPAHRP (73 aa). Residue serine 348 is modified to Phosphoserine. The span at 359 to 368 shows a compositional bias: polar residues; that stretch reads PSSTRDPSAS. 2 SH3 domains span residues 380 to 439 and 454 to 515; these read KKRK…VLPA and LEYG…VSRE. A binds to vinculin region spans residues 380–515; sequence KKRKAARLKF…PASYVQVSRE (136 aa). The residue at position 395 (serine 395) is a Phosphoserine. A disordered region spans residues 519–611; it reads RLCDDGPQLP…LGTSSPNTSQ (93 aa). Serine 530 is modified (phosphoserine; by MAPK1). Low complexity predominate over residues 535 to 553; sequence AAARSARHPSSPSALRSPA. Serine 544, serine 545, serine 547, serine 551, and serine 563 each carry phosphoserine. A compositionally biased stretch (polar residues) spans 560–584; that stretch reads GQTSPRRTGFSFPTQEPRPQTQNLG. Residues 612–671 enclose the SH3 3 domain; that stretch reads IHWTPYRAMYQYRPQNEDELELREGDRVDVMQQCDDGWFVGVSRRTQKFGTFPGNYVAPV. A binds to SOS region spans residues 612–671; the sequence is IHWTPYRAMYQYRPQNEDELELREGDRVDVMQQCDDGWFVGVSRRTQKFGTFPGNYVAPV.

In terms of assembly, interacts with DLG5 through its third SH3 domain. Interacts with vinculin by the first two SH3 domains and the proline rich region of vinculin. Binds to SOS (guanine nucleotide exchange factor of RAS and RAC), through its third SH3 domain. The formation of this complex is down-regulated by phosphorylation of SOS. Interacts with INPPL1/SHIP2, SAFB2, SOCS7 and SRCIN1. Interacts with FASLG. Interacts with MAPK1/ERK2. In terms of processing, phosphorylated at Ser-530 by MAPK1/ERK2 during cell spreading. Both isoforms are expressed in different tissues like heart, placenta, brain, skeletal muscle and pancreas. Isoform beta is especially found in liver.

It is found in the cell junction. It localises to the cytoplasm. Its subcellular location is the cytoskeleton. The protein resides in the nucleus. Vinexin alpha isoform promotes up-regulation of actin stress fiber formation. Vinexin beta isoform plays a role in cell spreading and enhances the activation of JNK/SAPK in response to EGF stimulation by using its third SH3 domain. This Homo sapiens (Human) protein is Vinexin (SORBS3).